The following is a 556-amino-acid chain: Arginine--tRNA ligase (556 aa).

The 'HIGH' region signature appears at 132–142 (ANPTGDLHLGH).

It belongs to the class-I aminoacyl-tRNA synthetase family. Monomer.

The protein localises to the cytoplasm. It carries out the reaction tRNA(Arg) + L-arginine + ATP = L-arginyl-tRNA(Arg) + AMP + diphosphate. The polypeptide is Arginine--tRNA ligase (Listeria welshimeri serovar 6b (strain ATCC 35897 / DSM 20650 / CCUG 15529 / CIP 8149 / NCTC 11857 / SLCC 5334 / V8)).